A 223-amino-acid polypeptide reads, in one-letter code: UPF0441 protein YgiB (223 aa).

The segment covering 178–195 (TVPKTAMAPKPATTTTVT) has biased composition (low complexity). Residues 178 to 223 (TVPKTAMAPKPATTTTVTRGGFGESVAKQSTMQRSATGTSSRSMGG) form a disordered region. Residues 204-223 (AKQSTMQRSATGTSSRSMGG) are compositionally biased toward polar residues.

It belongs to the UPF0441 family.

The sequence is that of UPF0441 protein YgiB from Shigella flexneri serotype 5b (strain 8401).